The chain runs to 59 residues: Potassium channel toxin alpha-KTx 3.5 (59 aa).

Residues 1-22 (MKVFSAVLIILFVCSMIIGINA) form the signal peptide. Intrachain disulfides connect Cys29-Cys49, Cys35-Cys54, and Cys39-Cys56. Positions 47-54 (GKCMNGKC) are interaction with Ca(2+)-activated K(+) channels.

Belongs to the short scorpion toxin superfamily. Potassium channel inhibitor family. Alpha-KTx 03 subfamily. In terms of tissue distribution, expressed by the venom gland.

It is found in the secreted. In terms of biological role, has also been shown to inhibit with high potency Kv1.3/KCNA3 and with low potency Kv1.1/KCNA1 and Kv1.2/KCNA2 voltage-gated potassium channels. Also binds and inhibits the molluscan calcium-activated potassium channels KCa (Kd=135 nM). This chain is Potassium channel toxin alpha-KTx 3.5 (KTX2), found in Androctonus australis (Sahara scorpion).